The following is a 253-amino-acid chain: tRNA pseudouridine synthase A (253 aa).

The active-site Nucleophile is the aspartate 53. Tyrosine 112 provides a ligand contact to substrate.

This sequence belongs to the tRNA pseudouridine synthase TruA family. As to quaternary structure, homodimer.

It catalyses the reaction uridine(38/39/40) in tRNA = pseudouridine(38/39/40) in tRNA. Its function is as follows. Formation of pseudouridine at positions 38, 39 and 40 in the anticodon stem and loop of transfer RNAs. This chain is tRNA pseudouridine synthase A, found in Lactococcus lactis subsp. cremoris (strain MG1363).